The chain runs to 235 residues: Orotidine 5'-phosphate decarboxylase (235 aa).

Substrate contacts are provided by residues Asp12, Lys34, 61–70, Thr116, Arg177, Gln186, and Arg207; that span reads DMKLLDIDNT. Lys63 (proton donor) is an active-site residue.

The protein belongs to the OMP decarboxylase family. Type 1 subfamily. Homodimer.

It catalyses the reaction orotidine 5'-phosphate + H(+) = UMP + CO2. Its pathway is pyrimidine metabolism; UMP biosynthesis via de novo pathway; UMP from orotate: step 2/2. Catalyzes the decarboxylation of orotidine 5'-monophosphate (OMP) to uridine 5'-monophosphate (UMP). This is Orotidine 5'-phosphate decarboxylase from Agrobacterium fabrum (strain C58 / ATCC 33970) (Agrobacterium tumefaciens (strain C58)).